We begin with the raw amino-acid sequence, 406 residues long: Argininosuccinate synthase (406 aa).

Residues 13–21 (AYSGGLDTS) and A40 each bind ATP. 2 residues coordinate L-citrulline: Y91 and S96. G121 lines the ATP pocket. L-aspartate contacts are provided by T123, N127, and D128. N127 provides a ligand contact to L-citrulline. The L-citrulline site is built by R131, S180, S189, E265, and Y277.

The protein belongs to the argininosuccinate synthase family. Type 1 subfamily. Homotetramer.

It localises to the cytoplasm. The catalysed reaction is L-citrulline + L-aspartate + ATP = 2-(N(omega)-L-arginino)succinate + AMP + diphosphate + H(+). Its pathway is amino-acid biosynthesis; L-arginine biosynthesis; L-arginine from L-ornithine and carbamoyl phosphate: step 2/3. The polypeptide is Argininosuccinate synthase (Syntrophotalea carbinolica (strain DSM 2380 / NBRC 103641 / GraBd1) (Pelobacter carbinolicus)).